A 174-amino-acid polypeptide reads, in one-letter code: Adenylate kinase (174 aa).

Residues 12–41 are NMP; that stretch reads STGDMLRAAIKAGTLLGLEAKKIIDEGGLV. AMP-binding positions include Thr13, Arg18, 39–41, 67–70, and Gln74; these read GLV and GFPR. The segment at 104–141 is LID; that stretch reads GRRVHLASGRTYHVTYNPPKVEGKDDVTGEDLIQRDDD. ATP contacts are provided by residues Arg105 and 114–115; that span reads TY. AMP is bound by residues Arg138 and Arg149.

It belongs to the adenylate kinase family. In terms of assembly, monomer.

It is found in the cytoplasm. It carries out the reaction AMP + ATP = 2 ADP. It functions in the pathway purine metabolism; AMP biosynthesis via salvage pathway; AMP from ADP: step 1/1. Its function is as follows. Catalyzes the reversible transfer of the terminal phosphate group between ATP and AMP. Plays an important role in cellular energy homeostasis and in adenine nucleotide metabolism. The polypeptide is Adenylate kinase (Neisseria polysaccharea).